Reading from the N-terminus, the 468-residue chain is Ribulose bisphosphate carboxylase large chain (468 aa).

K5 bears the N6,N6,N6-trimethyllysine mark. 2 residues coordinate substrate: N114 and T164. K166 (proton acceptor) is an active-site residue. K168 provides a ligand contact to substrate. K192, D194, and E195 together coordinate Mg(2+). K192 carries the post-translational modification N6-carboxylysine. H285 acts as the Proton acceptor in catalysis. Substrate is bound by residues R286, H318, and S370.

This sequence belongs to the RuBisCO large chain family. Type I subfamily. As to quaternary structure, heterohexadecamer of 8 large chains and 8 small chains; disulfide-linked. The disulfide link is formed within the large subunit homodimers. Requires Mg(2+) as cofactor. The disulfide bond which can form in the large chain dimeric partners within the hexadecamer appears to be associated with oxidative stress and protein turnover.

The protein resides in the plastid. The protein localises to the chloroplast. The catalysed reaction is 2 (2R)-3-phosphoglycerate + 2 H(+) = D-ribulose 1,5-bisphosphate + CO2 + H2O. It catalyses the reaction D-ribulose 1,5-bisphosphate + O2 = 2-phosphoglycolate + (2R)-3-phosphoglycerate + 2 H(+). Functionally, ruBisCO catalyzes two reactions: the carboxylation of D-ribulose 1,5-bisphosphate, the primary event in carbon dioxide fixation, as well as the oxidative fragmentation of the pentose substrate in the photorespiration process. Both reactions occur simultaneously and in competition at the same active site. The polypeptide is Ribulose bisphosphate carboxylase large chain (Catesbaea spinosa).